We begin with the raw amino-acid sequence, 336 residues long: Tetraacyldisaccharide 4'-kinase (336 aa).

Position 60–67 (60–67) interacts with ATP; sequence TVGGTGKT.

It belongs to the LpxK family.

It catalyses the reaction a lipid A disaccharide + ATP = a lipid IVA + ADP + H(+). The protein operates within glycolipid biosynthesis; lipid IV(A) biosynthesis; lipid IV(A) from (3R)-3-hydroxytetradecanoyl-[acyl-carrier-protein] and UDP-N-acetyl-alpha-D-glucosamine: step 6/6. Transfers the gamma-phosphate of ATP to the 4'-position of a tetraacyldisaccharide 1-phosphate intermediate (termed DS-1-P) to form tetraacyldisaccharide 1,4'-bis-phosphate (lipid IVA). This is Tetraacyldisaccharide 4'-kinase from Pseudomonas fluorescens (strain SBW25).